We begin with the raw amino-acid sequence, 151 residues long: Cytochrome c-type biogenesis protein CcmE (151 aa).

Topologically, residues 1-8 (MNPLRRKR) are cytoplasmic. A helical; Signal-anchor for type II membrane protein transmembrane segment spans residues 9 to 29 (LLIILAILVGVGIAVGLALSA). Over 30–151 (LQQNINLFYT…QSAPTPAKEG (122 aa)) the chain is Periplasmic. The heme site is built by histidine 124 and tyrosine 128.

Belongs to the CcmE/CycJ family.

Its subcellular location is the cell inner membrane. In terms of biological role, heme chaperone required for the biogenesis of c-type cytochromes. Transiently binds heme delivered by CcmC and transfers the heme to apo-cytochromes in a process facilitated by CcmF and CcmH. The sequence is that of Cytochrome c-type biogenesis protein CcmE from Pseudomonas fluorescens (strain SBW25).